The primary structure comprises 341 residues: Mitochondrial dimethyladenosine transferase 1 (341 aa).

A mitochondrion-targeting transit peptide spans 1-27 (MASSRTLGTFRLPPLPTIREIIKLFRL). S-adenosyl-L-methionine is bound by residues L38, G63, E85, K86, D111, V112, and N141.

This sequence belongs to the class I-like SAM-binding methyltransferase superfamily. rRNA adenine N(6)-methyltransferase family. KsgA subfamily. As to quaternary structure, interacts with mitochondrial RNA polymerase POLRMT. Interacts with TFAM. Bound to the maturing mtSSU until the late stages of assembly.

It localises to the mitochondrion. It catalyses the reaction adenosine(N)/adenosine(N+1) in rRNA + 4 S-adenosyl-L-methionine = N(6)-dimethyladenosine(N)/N(6)-dimethyladenosine(N+1) in rRNA + 4 S-adenosyl-L-homocysteine + 4 H(+). In terms of biological role, mitochondrial methyltransferase which uses S-adenosyl methionine to dimethylate two highly conserved adjacent adenosine residues (A1583 and A1584) within the loop of helix 45 at the 3-prime end of 12S rRNA, thereby regulating the assembly or stability of the small subunit of the mitochondrial ribosome. Also required for basal transcription of mitochondrial DNA, probably via its interaction with POLRMT and TFAM. Stimulates transcription independently of the methyltransferase activity. The chain is Mitochondrial dimethyladenosine transferase 1 (TFB1M) from Bos taurus (Bovine).